The chain runs to 52 residues: UPF0391 membrane protein XCV0245 (52 aa).

2 consecutive transmembrane segments (helical) span residues 5-25 (AIIF…GIAG) and 27-47 (ATNI…ISMF).

It belongs to the UPF0391 family.

Its subcellular location is the cell membrane. This is UPF0391 membrane protein XCV0245 from Xanthomonas euvesicatoria pv. vesicatoria (strain 85-10) (Xanthomonas campestris pv. vesicatoria).